A 1021-amino-acid polypeptide reads, in one-letter code: MATEGAAQLGNRVAGMVCSLWVLLLVSSVLALEEVLLDTTGETSEIGWLTYPPGGWDEVSVLDDQRRLTRTFEACHVAGAPPGTGQDNWLQTHFVERRGAQRAHIRLHFSVRACSSLGVSGGTCRETFTLYYRQAEEPDSPDSVSSWHLKRWTKVDTIAADESFPSSSSSSSSSSSAAWAVGPHGAGQRAGLQLNVKERSFGPLTQRGFYVAFQDTGACLALVAVRLFSYTCPAVLRSFASFPETQASGAGGASLVAAVGTCVAHAEPEEDGVGGQAGGSPPRLHCNGEGKWMVAVGGCRCQPGYQPARGDKACQACPRGLYKSSAGNAPCSPCPARSHAPNPAAPVCPCLEGFYRASSDPPEAPCTGPPSAPQELWFEVQGSALMLHWRLPRELGGRGDLLFNVVCKECEGRQEPASGGGGTCHRCRDEVHFDPRQRGLTESRVLVGGLRAHVPYILEVQAVNGVSELSPDPPQAAAINVSTSHEVPSAVPVVHQVSRASNSITVSWPQPDQTNGNILDYQLRYYDQAEDESHSFTLTSETNTATVTQLSPGHIYGFQVRARTAAGHGPYGGKVYFQTLPQGELSSQLPERLSLVIGSILGALAFLLLAAITVLAVVFQRKRRGTGYTEQLQQYSSPGLGVKYYIDPSTYEDPCQAIRELAREVDPAYIKIEEVIGTGSFGEVRQGRLQPRGRREQTVAIQALWAGGAESLQMTFLGRAAVLGQFQHPNILRLEGVVTKSRPLMVLTEFMELGPLDSFLRQREGQFSSLQLVAMQRGVAAAMQYLSSFAFVHRSLSAHSVLVNSHLVCKVARLGHSPQGPSCLLRWAAPEVIAHGKHTTSSDVWSFGILMWEVMSYGERPYWDMSEQEVLNAIEQEFRLPPPPGCPPGLHLLMLDTWQKDRARRPHFDQLVAAFDKMIRKPDTLQAGGDPGERPSQALLTPVALDFPCLDSPQAWLSAIGLECYQDNFSKFGLCTFSDVAQLSLEDLPALGITLAGHQKKLLHHIQLLQQHLRQQGSVEV.

The signal sequence occupies residues 1–31; it reads MATEGAAQLGNRVAGMVCSLWVLLLVSSVLA. Residues 32–594 lie on the Extracellular side of the membrane; that stretch reads LEEVLLDTTG…LSSQLPERLS (563 aa). The 205-residue stretch at 33-237 folds into the Eph LBD domain; it reads EEVLLDTTGE…FSYTCPAVLR (205 aa). The tract at residues 163 to 182 is disordered; the sequence is SFPSSSSSSSSSSSAAWAVG. The span at 166-176 shows a compositional bias: low complexity; that stretch reads SSSSSSSSSSS. 2 consecutive Fibronectin type-III domains span residues 369 to 486 and 487 to 582; these read PPSA…TSHE and VPSA…TLPQ. The N-linked (GlcNAc...) asparagine glycan is linked to Asn-480. A helical transmembrane segment spans residues 595-615; that stretch reads LVIGSILGALAFLLLAAITVL. At 616–1021 the chain is on the cytoplasmic side; that stretch reads AVVFQRKRRG…HLRQQGSVEV (406 aa). The Protein kinase domain occupies 670-919; that stretch reads IKIEEVIGTG…QLVAAFDKMI (250 aa). ATP is bound at residue 676-684; sequence IGTGSFGEV. The SAM domain maps to 948–1012; sequence PCLDSPQAWL…LHHIQLLQQH (65 aa). The PDZ-binding motif lies at 1019–1021; sequence VEV.

This sequence belongs to the protein kinase superfamily. Tyr protein kinase family. Ephrin receptor subfamily. As to quaternary structure, interacts with CBL and EPHB1. Interacts with FYN; this interaction takes place in a ligand-independent manner. In terms of processing, ligand-binding increases phosphorylation on tyrosine residues. Phosphorylation on tyrosine residues is mediated by transphosphorylation by the catalytically active EPHB1 in a ligand-independent manner. Tyrosine phosphorylation of the receptor may act as a switch on the functional transition from cell adhesion/attraction to de-adhesion/repulsion. Expressed in brain. Expressed in non invasive breast carcinoma cell lines (at protein level). Strong expression in brain and pancreas, and weak expression in other tissues, such as heart, placenta, lung, liver, skeletal muscle and kidney. Expressed in breast non invasive tumors but not in metastatic lesions. Isoform 3 is expressed in cell lines of glioblastomas, anaplastic astrocytomas, gliosarcomas and astrocytomas. Isoform 3 is not detected in normal tissues.

It is found in the membrane. The protein localises to the secreted. Functionally, kinase-defective receptor for members of the ephrin-B family. Binds to ephrin-B1 and ephrin-B2. Modulates cell adhesion and migration by exerting both positive and negative effects upon stimulation with ephrin-B2. Inhibits JNK activation, T-cell receptor-induced IL-2 secretion and CD25 expression upon stimulation with ephrin-B2. The chain is Ephrin type-B receptor 6 (EPHB6) from Homo sapiens (Human).